A 1349-amino-acid polypeptide reads, in one-letter code: Elongator complex protein 1 (1349 aa).

Residues Ser-529, Ser-539, Ser-551, Ser-636, and Ser-828 each carry the phosphoserine modification. The mediates dimerization stretch occupies residues 919–1349; that stretch reads QDVNVVYKSA…DFPKSHIVDF (431 aa). Ser-1198 and Ser-1202 each carry phosphoserine; by HRR25. 2 positions are modified to phosphoserine: Ser-1205 and Ser-1209. Residues 1214–1228 show a composition bias toward low complexity; sequence YTGKTGGTAKTGASR. Residues 1214-1245 are disordered; it reads YTGKTGGTAKTGASRRTAKNKRREERKRARGK. Residues 1228 to 1246 form a required for binding to tRNA region; it reads RRTAKNKRREERKRARGKK.

The protein belongs to the ELP1/IKA1 family. As to quaternary structure, homodimer; dimerization promotes ELP1/IKI3 stability and elongator complex formation. Component of the elongator complex which consists of ELP1/IKI3, ELP2, ELP3, ELP4, ELP5/IKI1 and ELP6. The elongator complex is composed of two copies of the Elp123 subcomplex (composed of ELP1/IKI3, ELP2 and ELP3) and two copies of the Elp456 subcomplex (composed of ELP4, ELP5/IKI1 and ELP6). The Elp123 subcomplex forms a two-lobed scaffold, which binds the Elp456 subcomplex asymmetrically. In the complex, ELP1/IKI3 interacts with ELP2. In each lobe, ELP2 is tightly sandwiched between ELP1/IKI3 and ELP3. The Elp123 subcomplex binds tRNA through ELP1/IKI3 and ELP3 and can bind 2 tRNAs simultaneously. tRNA-binding induces conformational rearrangements which precisely position the targeted anticodon base in the active site. The Elp456 subcomplex binds tRNA and has ATPase activity. ELP1/IKI3 interacts with HRR25 and KTI12. Interacts with KTI11/DPH3. Phosphorylation promotes the tRNA modification function of the elongator complex.

The protein resides in the cytoplasm. The protein localises to the nucleus. Its pathway is tRNA modification; 5-methoxycarbonylmethyl-2-thiouridine-tRNA biosynthesis. Component of the elongator complex which is required for multiple tRNA modifications, including mcm5U (5-methoxycarbonylmethyl uridine), mcm5s2U (5-methoxycarbonylmethyl-2-thiouridine), and ncm5U (5-carbamoylmethyl uridine). The elongator complex catalyzes formation of carboxymethyluridine in the wobble base at position 34 in tRNAs. Functions as a gamma-toxin target (TOT); disruption of the complex confers resistance to Kluyveromyces lactis toxin zymocin (pGKL1 killer toxin). May also be involved in sensitivity to Pichia inositovora toxin. ELP1/IKI3 binds to tRNA, mediating interaction of the elongator complex with tRNA. Independently, may be involved in polarized exocytosis. In Saccharomyces cerevisiae (strain ATCC 204508 / S288c) (Baker's yeast), this protein is Elongator complex protein 1 (IKI3).